A 540-amino-acid polypeptide reads, in one-letter code: Probable ATP-dependent RNA helicase DDX28 (540 aa).

The short motif at 3-18 (LAGPSRLLALAVRLLL) is the Mitochondrial targeting signal element. The Q motif motif lies at 126–156 (GSFVDLGLEPRVLLALQEAVPEVVQPTSVQS). The Helicase ATP-binding domain occupies 159 to 351 (IPPLLRGRHL…SKVTSPDSLT (193 aa)). 172–179 (AETGSGKT) provides a ligand contact to ATP. The Nuclear export signal motif lies at 180–191 (LSYLLPLFQRLL). The short motif at 286–289 (DEVD) is the DEAD element. The region spanning 377–536 (KVTELVQILK…GLASSVGDPL (160 aa)) is the Helicase C-terminal domain. The Nuclear localization signal signature appears at 520–523 (RRRR).

It belongs to the DEAD box helicase family. Monomer. Found in a complex with GRSF1, DHX30, FASTKD2 and FASTKD5. Associates with the 16S mitochondrial rRNA (16S mt-rRNA) and with the mitochondrial ribosome large subunit (39S).

The protein resides in the nucleus. It is found in the mitochondrion. Its subcellular location is the mitochondrion matrix. The protein localises to the mitochondrion nucleoid. It catalyses the reaction ATP + H2O = ADP + phosphate + H(+). Plays an essential role in facilitating the proper assembly of the mitochondrial large ribosomal subunit and its helicase activity is essential for this function. May be involved in RNA processing or transport. Has RNA and Mg(2+)-dependent ATPase activity. In Mus musculus (Mouse), this protein is Probable ATP-dependent RNA helicase DDX28 (Ddx28).